The following is a 389-amino-acid chain: Phospho-N-acetylmuramoyl-pentapeptide-transferase (389 aa).

A run of 10 helical transmembrane segments spans residues 25–45 (RAVMATITALGIGLVCGPWVI), 73–93 (TMGGVLILIGIAVATLLWGDL), 97–117 (FIWIVMLVTFGFGVIGWVDDY), 135–155 (FWQSVIGLFAAVYLAFSVSEA), 190–210 (ISYPLGVWGFIVLTYFVIVGA), 222–242 (GLVIMPVVLVGASLGVFAYVM), 258–278 (GAGELLIFCSAMGGAGLAFLW), 286–306 (VFMGDVGALALGGALGTVAVI), 311–331 (IVLFIMGGIFVAETLSVMLQV), and 366–386 (QVVVRFWIITLMLCLFGLSTL).

This sequence belongs to the glycosyltransferase 4 family. MraY subfamily. The cofactor is Mg(2+).

The protein resides in the cell inner membrane. The catalysed reaction is UDP-N-acetyl-alpha-D-muramoyl-L-alanyl-gamma-D-glutamyl-meso-2,6-diaminopimeloyl-D-alanyl-D-alanine + di-trans,octa-cis-undecaprenyl phosphate = di-trans,octa-cis-undecaprenyl diphospho-N-acetyl-alpha-D-muramoyl-L-alanyl-D-glutamyl-meso-2,6-diaminopimeloyl-D-alanyl-D-alanine + UMP. It functions in the pathway cell wall biogenesis; peptidoglycan biosynthesis. Its function is as follows. Catalyzes the initial step of the lipid cycle reactions in the biosynthesis of the cell wall peptidoglycan: transfers peptidoglycan precursor phospho-MurNAc-pentapeptide from UDP-MurNAc-pentapeptide onto the lipid carrier undecaprenyl phosphate, yielding undecaprenyl-pyrophosphoryl-MurNAc-pentapeptide, known as lipid I. This chain is Phospho-N-acetylmuramoyl-pentapeptide-transferase, found in Burkholderia vietnamiensis (strain G4 / LMG 22486) (Burkholderia cepacia (strain R1808)).